A 136-amino-acid chain; its full sequence is Translation initiation factor 5A (136 aa).

Position 37 is a hypusine (lysine 37).

It belongs to the eIF-5A family.

Its subcellular location is the cytoplasm. Its function is as follows. Functions by promoting the formation of the first peptide bond. The protein is Translation initiation factor 5A of Thermococcus kodakarensis (strain ATCC BAA-918 / JCM 12380 / KOD1) (Pyrococcus kodakaraensis (strain KOD1)).